The following is a 441-amino-acid chain: Glutamyl-tRNA reductase (441 aa).

Residues 58 to 61, Ser-116, 121 to 123, and Gln-127 each bind substrate; these read TCNR and EPD. Cys-59 acts as the Nucleophile in catalysis. 195 to 200 provides a ligand contact to NADP(+); the sequence is GAGMAG.

This sequence belongs to the glutamyl-tRNA reductase family. Homodimer.

It catalyses the reaction (S)-4-amino-5-oxopentanoate + tRNA(Glu) + NADP(+) = L-glutamyl-tRNA(Glu) + NADPH + H(+). It participates in porphyrin-containing compound metabolism; protoporphyrin-IX biosynthesis; 5-aminolevulinate from L-glutamyl-tRNA(Glu): step 1/2. Its function is as follows. Catalyzes the NADPH-dependent reduction of glutamyl-tRNA(Glu) to glutamate 1-semialdehyde (GSA). The polypeptide is Glutamyl-tRNA reductase (Ignicoccus hospitalis (strain KIN4/I / DSM 18386 / JCM 14125)).